The sequence spans 1316 residues: MEKYHVLEMIGEGSFGRVYKGRKKYSAQVVALKFIPKLGRSEKELRNLQREIEIMRGLWHPNIVHMLDSFETDKEVVVVTDYAEGELFQILEDDGKLPEDQVQAIAAQLVSALYYLHSHRILHRDMKPQNILLAKGGGIKLCDFGFARAMSTNTMVLTSIKGTPLYMSPELVEERPYDHTADLWSVGCILYELAVGTPPFYTTSIFQLVSLILKDPVRWPSTISSCFKNFLQGLLTKDPRQRLSWPDLLHHPFIAGRVTIITEPAGSDLGTPFTSRLPPELQVLKDEQAHRLAPKGNQSRILRQACKLMAEEAKQKEDQNAGSALEQEDGLCKVTPSTAPVPGLKATPQESSLLAGILASEMKNNWEDWGAGEAPRTSRENHINLECEQGFPEPRPEAMGRQSTDVVDPENEEPDSDDEWQRLLETSEPGPVQLKSPLTLLCNPDFCQRIQSQLRGTGEQILKGVLDGVSHLLPVLRILSSLLSSCNDSVLLYSFCQEAGLPELPLSLLRYSQESSSIQQQPWYGALLRDLVAVVQAYFSCTFNLERSQTGDSLQVFQEAASLFLDLLGKLLAQSDDSEQTFRRDSLMCFAVLCEAVDGNSWAVSKAFYSSLLTTQRAVLDGLLHGLTVPQLPFHTPPGAPQVSQPLREQSEDVPGAISSALAAMCTAPVGLPSCWDAKEQVSWHLANQLTEDSSQLRPSLISGLRHHVLCLHLLKVLYACCYISERLCHILGQEPLALESLLMLVQGKVKVADWEESTEVALYLLSLLVFRLQDLPSGMEKLGSEVATLFTHSHVVSLVNAAACLLGQLGQQGVTFDLQPREWIAAAAHALSAPAEVRLTPPYSCGFYDGLLILLLQLLMQVQGKPGLIRDVVGSEVWTILWHRFSMALRLPEEVSAQEDDLLLSSPSSLEPDWTLISPQGMAALLSLAMAIFTQESQLCLSHLSQHGSVLMLTLKHLLSPSFLHHLSQAPQGPEFLPVVVLSVCKLLCFPFALDVDADLLVGVLADLRASEVVVCLLQVCCHHLSLLQAELPIGLLTRLALTDSASLKQFVNTVATSSRAIISFLSVVLLSDQPLMISDLLSLLTHTARILSPSHLSFIQELLSGSDESYRPLRSLLGHSENTVRVRAYGLLGHLLQHSMALRGALQSQSGLLNLLLLGLGDKDPAVRRSASFAVGNAAYQAGPLGPALAAAVPSMTQLLGDAQDGIRRNAASALGNLGPEGLGKELLKCQVPQRLLEMACGDPQPTVKEAALIALRSLQQESCIHQVLVSLGASEKLALLSLGNQLLPNSSNRPASVRHCRKLIQLLRPTHST.

Residues 4–254 enclose the Protein kinase domain; it reads YHVLEMIGEG…WPDLLHHPFI (251 aa). ATP-binding positions include 10 to 18 and Lys33; that span reads IGEGSFGRV. Catalysis depends on Asp125, which acts as the Proton acceptor. The disordered stretch occupies residues 389–418; it reads QGFPEPRPEAMGRQSTDVVDPENEEPDSDD. The segment covering 407–418 has biased composition (acidic residues); that stretch reads VDPENEEPDSDD.

The protein belongs to the protein kinase superfamily. Ser/Thr protein kinase family. Interacts with SPAG16 and KIF27. Requires Mg(2+) as cofactor. As to expression, weakly expressed in the heart and thymus, present at moderate to high levels in the lungs, pancreas, and kidneys and at higher levels in the brain and cerebellum. Very highly expressed in the testis.

The protein resides in the cytoplasm. Its subcellular location is the nucleus. It is found in the cytoskeleton. The protein localises to the cilium axoneme. The enzyme catalyses L-seryl-[protein] + ATP = O-phospho-L-seryl-[protein] + ADP + H(+). It carries out the reaction L-threonyl-[protein] + ATP = O-phospho-L-threonyl-[protein] + ADP + H(+). In terms of biological role, serine/threonine protein kinase which plays an important role in the sonic hedgehog (Shh) pathway by regulating the activity of GLI transcription factors. Controls the activity of the transcriptional regulators GLI1, GLI2 and GLI3 by opposing the effect of SUFU and promoting their nuclear localization. GLI2 requires an additional function of STK36 to become transcriptionally active, but the enzyme does not need to possess an active kinase catalytic site for this to occur. Required for postnatal development, possibly by regulating the homeostasis of cerebral spinal fluid or ciliary function. Essential for construction of the central pair apparatus of motile cilia. The protein is Serine/threonine-protein kinase 36 of Mus musculus (Mouse).